Consider the following 481-residue polypeptide: Glycosyl hydrolase family 109 protein 1 (481 aa).

The tat-type signal signal peptide spans methionine 1–alanine 29. NAD(+) is bound by residues glutamate 84 to arginine 85, aspartate 106, tryptophan 155 to histidine 158, glutamate 175 to valine 176, and asparagine 204. Residues tyrosine 233, arginine 252, tyrosine 264–histidine 267, and tyrosine 347 contribute to the substrate site. Residue tyrosine 264 coordinates NAD(+).

The protein belongs to the Gfo/Idh/MocA family. Glycosyl hydrolase 109 subfamily. NAD(+) serves as cofactor. Predicted to be exported by the Tat system. The position of the signal peptide cleavage has not been experimentally proven.

Functionally, glycosidase. This is Glycosyl hydrolase family 109 protein 1 from Akkermansia muciniphila (strain ATCC BAA-835 / DSM 22959 / JCM 33894 / BCRC 81048 / CCUG 64013 / CIP 107961 / Muc).